A 377-amino-acid chain; its full sequence is Succinyl-diaminopimelate desuccinylase (377 aa).

A Zn(2+)-binding site is contributed by H66. D68 is an active-site residue. D99 contributes to the Zn(2+) binding site. Catalysis depends on E133, which acts as the Proton acceptor. E134, E162, and H348 together coordinate Zn(2+).

It belongs to the peptidase M20A family. DapE subfamily. As to quaternary structure, homodimer. The cofactor is Zn(2+). Co(2+) serves as cofactor.

It catalyses the reaction N-succinyl-(2S,6S)-2,6-diaminopimelate + H2O = (2S,6S)-2,6-diaminopimelate + succinate. It participates in amino-acid biosynthesis; L-lysine biosynthesis via DAP pathway; LL-2,6-diaminopimelate from (S)-tetrahydrodipicolinate (succinylase route): step 3/3. Its function is as follows. Catalyzes the hydrolysis of N-succinyl-L,L-diaminopimelic acid (SDAP), forming succinate and LL-2,6-diaminopimelate (DAP), an intermediate involved in the bacterial biosynthesis of lysine and meso-diaminopimelic acid, an essential component of bacterial cell walls. In Methylococcus capsulatus (strain ATCC 33009 / NCIMB 11132 / Bath), this protein is Succinyl-diaminopimelate desuccinylase.